The following is a 347-amino-acid chain: Protein RecA (347 aa).

64–71 lines the ATP pocket; sequence GPESSGKT.

This sequence belongs to the RecA family.

The protein localises to the cytoplasm. Its function is as follows. Can catalyze the hydrolysis of ATP in the presence of single-stranded DNA, the ATP-dependent uptake of single-stranded DNA by duplex DNA, and the ATP-dependent hybridization of homologous single-stranded DNAs. It interacts with LexA causing its activation and leading to its autocatalytic cleavage. The chain is Protein RecA from Bartonella henselae (strain ATCC 49882 / DSM 28221 / CCUG 30454 / Houston 1) (Rochalimaea henselae).